A 316-amino-acid polypeptide reads, in one-letter code: ATP synthase gamma chain (316 aa).

Belongs to the ATPase gamma chain family. As to quaternary structure, F-type ATPases have 2 components, CF(1) - the catalytic core - and CF(0) - the membrane proton channel. CF(1) has five subunits: alpha(3), beta(3), gamma(1), delta(1), epsilon(1). CF(0) has three main subunits: a, b and c.

It is found in the cellular thylakoid membrane. Functionally, produces ATP from ADP in the presence of a proton gradient across the membrane. The gamma chain is believed to be important in regulating ATPase activity and the flow of protons through the CF(0) complex. The chain is ATP synthase gamma chain from Prochlorococcus marinus subsp. pastoris (strain CCMP1986 / NIES-2087 / MED4).